The chain runs to 130 residues: Large ribosomal subunit protein bL20 (130 aa).

Belongs to the bacterial ribosomal protein bL20 family.

Functionally, binds directly to 23S ribosomal RNA and is necessary for the in vitro assembly process of the 50S ribosomal subunit. It is not involved in the protein synthesizing functions of that subunit. The chain is Large ribosomal subunit protein bL20 from Salinispora arenicola (strain CNS-205).